The following is a 335-amino-acid chain: Ferrochelatase (335 aa).

2 residues coordinate Fe cation: histidine 207 and glutamate 288.

Belongs to the ferrochelatase family.

It localises to the cytoplasm. It carries out the reaction heme b + 2 H(+) = protoporphyrin IX + Fe(2+). The protein operates within porphyrin-containing compound metabolism; protoheme biosynthesis; protoheme from protoporphyrin-IX: step 1/1. Functionally, catalyzes the ferrous insertion into protoporphyrin IX. In Helicobacter pylori (strain HPAG1), this protein is Ferrochelatase.